Reading from the N-terminus, the 409-residue chain is Lysosome-associated membrane glycoprotein 1 (409 aa).

Positions 1-25 (MAAPGGARRRPLLLLLFAGLVHGAS) are cleaved as a signal peptide. Residues 26–187 (AVFVVKNGNG…SNFSREETRC (162 aa)) form a first lumenal domain region. Topologically, residues 26-374 (AVFVVKNGNG…EECQLDENSM (349 aa)) are lumenal. 10 N-linked (GlcNAc...) asparagine glycosylation sites follow: Asn-34, Asn-59, Asn-72, Asn-80, Asn-103, Asn-117, Asn-126, Asn-146, Asn-161, and Asn-179. Residues Cys-38 and Cys-76 are joined by a disulfide bond. The cysteines at positions 151 and 187 are disulfide-linked. Positions 180 to 207 (FSREETRCEQDLPTPTTPPQPAPTPAPA) are disordered. The hinge stretch occupies residues 188 to 219 (EQDLPTPTTPPQPAPTPAPASPAVFRYNVSGS). Pro residues predominate over residues 194-207 (PTTPPQPAPTPAPA). 8 N-linked (GlcNAc...) asparagine glycosylation sites follow: Asn-215, Asn-220, Asn-241, Asn-253, Asn-260, Asn-285, Asn-299, and Asn-314. The tract at residues 220–374 (NGTCLLASMG…EECQLDENSM (155 aa)) is second lumenal domain. Cys-223 and Cys-261 are disulfide-bonded. Cys-330 and Cys-367 form a disulfide bridge. A helical membrane pass occupies residues 375 to 398 (LIPIAVGGALAGLVLIVLLAYLIG). At 399–409 (RKRSHAGYQTI) the chain is on the cytoplasmic side.

It belongs to the LAMP family. As to quaternary structure, interacts with ABCB9; this interaction strongly stabilizes ABCB9 and protects ABCB9 against lysosomal degradation. Interacts with FURIN. Interacts with TMEM175; inhibiting the proton channel activity of TMEM175. Post-translationally, O- and N-glycosylated; some of the N-glycans attached to LAMP-1 are polylactosaminoglycans.

It localises to the lysosome membrane. It is found in the endosome membrane. Its subcellular location is the late endosome membrane. The protein localises to the cell membrane. The protein resides in the cytolytic granule membrane. Lysosomal membrane glycoprotein which plays an important role in lysosome biogenesis, lysosomal pH regulation, autophagy and cholesterol homeostasis. Acts as an important regulator of lysosomal lumen pH regulation by acting as a direct inhibitor of the proton channel TMEM175, facilitating lysosomal acidification for optimal hydrolase activity. Also plays an important role in NK-cells cytotoxicity. Mechanistically, participates in cytotoxic granule movement to the cell surface and perforin trafficking to the lytic granule. In addition, protects NK-cells from degranulation-associated damage induced by their own cytotoxic granule content. Presents carbohydrate ligands to selectins. This is Lysosome-associated membrane glycoprotein 1 (LAMP1) from Bos taurus (Bovine).